The primary structure comprises 540 residues: Medium/long-chain-fatty-acid--[acyl-carrier-protein] ligase FadD10 (540 aa).

Thr-177 serves as a coordination point for Mg(2+). ATP is bound by residues Ile-226, Val-316, and Ser-320. Glu-321 is a Mg(2+) binding site. Residue Asp-408 participates in ATP binding.

It belongs to the ATP-dependent AMP-binding enzyme family. Homodimer. Requires Mg(2+) as cofactor.

The protein localises to the cytoplasm. The catalysed reaction is a medium-chain fatty acid + holo-[ACP] + ATP = a medium-chain fatty acyl-[ACP] + AMP + diphosphate. The enzyme catalyses a medium-chain fatty acid + ATP + H(+) = a medium-chain fatty acyl-AMP + diphosphate. It catalyses the reaction a medium-chain fatty acyl-AMP + holo-[ACP] = a medium-chain fatty acyl-[ACP] + AMP + H(+). It carries out the reaction a long-chain fatty acid + holo-[ACP] + ATP = a long-chain fatty acyl-[ACP] + AMP + diphosphate. The catalysed reaction is a long-chain fatty acid + ATP + H(+) = a long-chain fatty acyl-AMP + diphosphate. The enzyme catalyses a long-chain fatty acyl-AMP + holo-[ACP] = a long-chain fatty acyl-[ACP] + AMP + H(+). It catalyses the reaction a (2E)-enoyl fatty acid + holo-[ACP] + ATP = a (2E)-enoyl-[ACP] + AMP + diphosphate. It carries out the reaction a (2E)-enoyl fatty acid + ATP + H(+) = a (2E)-2-fatty-enoyl-AMP + diphosphate. The catalysed reaction is a (2E)-2-fatty-enoyl-AMP + holo-[ACP] = a (2E)-enoyl-[ACP] + AMP + H(+). The enzyme catalyses a (3R)-3-isocyanyl-fatty acid + holo-[ACP] + ATP = a (3R)-3-isocyanyl-fatty acyl-[ACP] + AMP + diphosphate. It catalyses the reaction a (3R)-3-isocyanyl-fatty acid + ATP + H(+) = a (3R)-3-isocyanyl-fatty acyl-AMP + diphosphate. It carries out the reaction a (3R)-3-isocyanyl-fatty acyl-AMP + holo-[ACP] = a (3R)-3-isocyanyl-fatty acyl-[ACP] + AMP + H(+). It functions in the pathway lipid metabolism; fatty acid metabolism. In terms of biological role, acyl:acyl-carrier protein ligase involved in the biosynthesis of a unique class of isonitrile lipopeptides (INLPs) that seem to function as virulence factors in M.tuberculosis and to play a role in metal acquisition. Catalyzes the activation of medium/long-chain fatty acids as acyl-adenylates (acyl-AMP), which are then transferred to the phosphopantetheine arm of the acyl-carrier protein (ACP) MT0109. Acts twice during the INLP pathway, catalyzing the activation of a (2E)-enoyl fatty acid as well as the corresponding (3R)-3-isocyanyl-fatty acid as acyl-adenylates (acyl-AMP), and then the acyl transfer to the dedicated acyl-carrier protein MT0109. In Mycobacterium tuberculosis (strain CDC 1551 / Oshkosh), this protein is Medium/long-chain-fatty-acid--[acyl-carrier-protein] ligase FadD10 (fadD10).